We begin with the raw amino-acid sequence, 264 residues long: ATP synthase subunit a (264 aa).

6 helical membrane passes run Thr29–Phe49, Ile90–Ile110, Asp134–Ile154, Ile177–Leu197, Leu208–Val228, and Leu235–Val255.

It belongs to the ATPase A chain family. As to quaternary structure, F-type ATPases have 2 components, CF(1) - the catalytic core - and CF(0) - the membrane proton channel. CF(1) has five subunits: alpha(3), beta(3), gamma(1), delta(1), epsilon(1). CF(0) has three main subunits: a(1), b(2) and c(9-12). The alpha and beta chains form an alternating ring which encloses part of the gamma chain. CF(1) is attached to CF(0) by a central stalk formed by the gamma and epsilon chains, while a peripheral stalk is formed by the delta and b chains.

The protein resides in the cell inner membrane. Its function is as follows. Key component of the proton channel; it plays a direct role in the translocation of protons across the membrane. This Shewanella loihica (strain ATCC BAA-1088 / PV-4) protein is ATP synthase subunit a.